The chain runs to 87 residues: Omega-lycotoxin-Am1d (87 aa).

The signal sequence occupies residues 1 to 17; sequence MKLSIFFVLFFIAIAYC. Residues 18-40 constitute a propeptide that is removed on maturation; sequence QPEFLDDEEDEVEETLPVAEEGR. 4 disulfides stabilise this stretch: Cys-44/Cys-59, Cys-51/Cys-64, Cys-58/Cys-84, and Cys-66/Cys-82.

The protein belongs to the neurotoxin omega-lctx family. As to expression, expressed by the venom gland.

Its subcellular location is the secreted. In terms of biological role, modulates Cav2.1/CACNA1A voltage-gated calcium channels (P/Q-type currents) in rat cerebellar Purkinje cells and hippocampal CA1-CA3 neurons. At saturating concentrations (&gt;10 nM) decelerates activation kinetics and slightly increases peak amplitude without affecting deactivation kinetics. In vivo, does not cause death when intravenously injected into mice. In rat models, through its activity on Cav2.1/CACNA1A, has an ameliorative effect on memory defects provoked by hyperstimulation of N-methyl-D-aspartate receptors (NMDARs) in the hippocampus. This chain is Omega-lycotoxin-Am1d, found in Alopecosa marikovskyi (Wolf spider).